Consider the following 418-residue polypeptide: Vasopressin V1a receptor (418 aa).

The interval 1-43 is disordered; it reads MRLSAGPDAGPSGNSSPWWPLATGAGNTSREAEALGEGNGPPR. Residues 1 to 52 are Extracellular-facing; the sequence is MRLSAGPDAGPSGNSSPWWPLATGAGNTSREAEALGEGNGPPRDVRNEELAK. Residue Asn27 is glycosylated (N-linked (GlcNAc...) asparagine). Residues 53-76 traverse the membrane as a helical segment; the sequence is LEIAVLAVTFAVAVLGNSSVLLAL. At 77-88 the chain is on the cytoplasmic side; sequence HRTPRKTSRMHL. The helical transmembrane segment at 89-110 threads the bilayer; it reads FIRHLSLADLAVAFFQVLPQMC. At 111-125 the chain is on the extracellular side; that stretch reads WDITYRFRGPDWLCR. Cys124 and Cys203 are joined by a disulfide. Residues 126–147 traverse the membrane as a helical segment; that stretch reads VVKHLQVFGMFASAYMLVVMTA. The Cytoplasmic segment spans residues 148-168; the sequence is DRYIAVCHPLKTLQQPARRSR. The chain crosses the membrane as a helical span at residues 169-190; sequence LMIAAAWVLSFVLSTPQYFVFS. Residues 191 to 218 are Extracellular-facing; the sequence is MIEVNNVTKARDCWATFIQPWGSRAYVT. Asn196 carries an N-linked (GlcNAc...) asparagine glycan. A helical transmembrane segment spans residues 219 to 239; the sequence is WMTGGIFVAPVVILGTCYGFI. The Cytoplasmic portion of the chain corresponds to 240–293; that stretch reads CYNIWCNVRGKTASRQSKGAEQAGVAFQKGFLLAPCVSSVKSISRAKIRTVKMT. Residues 294–313 form a helical membrane-spanning segment; sequence FVIVTAYIVCWAPFFIIQMW. Residues 314–331 lie on the Extracellular side of the membrane; sequence SVWDPMSVWTESENPTIT. A helical transmembrane segment spans residues 332–351; that stretch reads ITALLGSLNSCCNPWIYMFF. Residues 352–418 are Cytoplasmic-facing; the sequence is SGHLLQDCVQ…KSIKFIPVST (67 aa). S-palmitoyl cysteine attachment occurs at residues Cys365 and Cys366. A disordered region spans residues 377-410; the sequence is DTDSMSRRQTFYSNNRSPTNSTGMWKDSPKSSKS. Polar residues predominate over residues 383–399; that stretch reads RRQTFYSNNRSPTNSTG. Ser404 is subject to Phosphoserine.

Belongs to the G-protein coupled receptor 1 family. Vasopressin/oxytocin receptor subfamily.

It is found in the cell membrane. Its function is as follows. Receptor for arginine vasopressin. The activity of this receptor is mediated by G proteins which activate a phosphatidyl-inositol-calcium second messenger system. Has been involved in social behaviors, including affiliation and attachment. This is Vasopressin V1a receptor (AVPR1A) from Homo sapiens (Human).